A 721-amino-acid chain; its full sequence is Fatty acid oxidation complex subunit alpha (721 aa).

The enoyl-CoA hydratase/isomerase stretch occupies residues 1–190; sequence MIYEGKAITV…KVGVVDAIVA (190 aa). Asp-297 contributes to the substrate binding site. Residues 312–721 are 3-hydroxyacyl-CoA dehydrogenase; sequence RDVKQAAVLG…SFFGQASSEV (410 aa). NAD(+) is bound by residues Met-325, Asp-344, 401–403, Lys-408, and Ser-430; that span reads VVE. His-451 serves as the catalytic For 3-hydroxyacyl-CoA dehydrogenase activity. An NAD(+)-binding site is contributed by Asn-454. Residues Asn-501 and Tyr-660 each contribute to the substrate site.

In the N-terminal section; belongs to the enoyl-CoA hydratase/isomerase family. This sequence in the C-terminal section; belongs to the 3-hydroxyacyl-CoA dehydrogenase family. In terms of assembly, heterotetramer of two alpha chains (FadB) and two beta chains (FadA).

The enzyme catalyses a (3S)-3-hydroxyacyl-CoA + NAD(+) = a 3-oxoacyl-CoA + NADH + H(+). The catalysed reaction is a (3S)-3-hydroxyacyl-CoA = a (2E)-enoyl-CoA + H2O. It catalyses the reaction a 4-saturated-(3S)-3-hydroxyacyl-CoA = a (3E)-enoyl-CoA + H2O. It carries out the reaction (3S)-3-hydroxybutanoyl-CoA = (3R)-3-hydroxybutanoyl-CoA. The enzyme catalyses a (3Z)-enoyl-CoA = a 4-saturated (2E)-enoyl-CoA. The catalysed reaction is a (3E)-enoyl-CoA = a 4-saturated (2E)-enoyl-CoA. It participates in lipid metabolism; fatty acid beta-oxidation. Functionally, involved in the aerobic and anaerobic degradation of long-chain fatty acids via beta-oxidation cycle. Catalyzes the formation of 3-oxoacyl-CoA from enoyl-CoA via L-3-hydroxyacyl-CoA. It can also use D-3-hydroxyacyl-CoA and cis-3-enoyl-CoA as substrate. The chain is Fatty acid oxidation complex subunit alpha from Pseudomonas syringae pv. tomato (strain ATCC BAA-871 / DC3000).